The primary structure comprises 393 residues: NAD(P)H-quinone oxidoreductase subunit H, chloroplastic (393 aa).

Belongs to the complex I 49 kDa subunit family. As to quaternary structure, NDH is composed of at least 16 different subunits, 5 of which are encoded in the nucleus.

Its subcellular location is the plastid. The protein localises to the chloroplast thylakoid membrane. It carries out the reaction a plastoquinone + NADH + (n+1) H(+)(in) = a plastoquinol + NAD(+) + n H(+)(out). It catalyses the reaction a plastoquinone + NADPH + (n+1) H(+)(in) = a plastoquinol + NADP(+) + n H(+)(out). NDH shuttles electrons from NAD(P)H:plastoquinone, via FMN and iron-sulfur (Fe-S) centers, to quinones in the photosynthetic chain and possibly in a chloroplast respiratory chain. The immediate electron acceptor for the enzyme in this species is believed to be plastoquinone. Couples the redox reaction to proton translocation, and thus conserves the redox energy in a proton gradient. This Crucihimalaya wallichii (Rock-cress) protein is NAD(P)H-quinone oxidoreductase subunit H, chloroplastic.